The sequence spans 264 residues: MKSKLKLHGFNNLTKTLSFNIYDICYAETPQDQQAYVEYINSVYDAERLTRILTDVVDIIGANILNIARQDYDPQGASVTILISEQPVTPTESQIEESPGPLPETILAHLDKSHITVHTYPEIHPVDGIATFRVDIDVSTCGVISPLKALNYLIHKFESDIVTVDYRVRGFTRDVEGKKHFIDHEINSIQNYLSEDTRNGYQMTDVNVYQENLFHTKMLLKQFELDNYLFGDATSNLSAEQREQVTAKVKHEMLEIFYGRNVAV.

Residue serine 113 is the Schiff-base intermediate with substrate; via pyruvic acid of the active site. Pyruvic acid (Ser); by autocatalysis is present on serine 113. The Proton acceptor; for processing activity role is filled by histidine 118. Cysteine 141 serves as the catalytic Proton donor; for catalytic activity.

The protein belongs to the prokaryotic AdoMetDC family. Type 2 subfamily. Heterooctamer of four alpha and four beta chains arranged as a tetramer of alpha/beta heterodimers. Requires pyruvate as cofactor. Is synthesized initially as an inactive proenzyme. Formation of the active enzyme involves a self-maturation process in which the active site pyruvoyl group is generated from an internal serine residue via an autocatalytic post-translational modification. Two non-identical subunits are generated from the proenzyme in this reaction, and the pyruvate is formed at the N-terminus of the alpha chain, which is derived from the carboxyl end of the proenzyme. The post-translation cleavage follows an unusual pathway, termed non-hydrolytic serinolysis, in which the side chain hydroxyl group of the serine supplies its oxygen atom to form the C-terminus of the beta chain, while the remainder of the serine residue undergoes an oxidative deamination to produce ammonia and the pyruvoyl group blocking the N-terminus of the alpha chain.

It carries out the reaction S-adenosyl-L-methionine + H(+) = S-adenosyl 3-(methylsulfanyl)propylamine + CO2. It participates in amine and polyamine biosynthesis; S-adenosylmethioninamine biosynthesis; S-adenosylmethioninamine from S-adenosyl-L-methionine: step 1/1. Catalyzes the decarboxylation of S-adenosylmethionine to S-adenosylmethioninamine (dcAdoMet), the propylamine donor required for the synthesis of the polyamines spermine and spermidine from the diamine putrescine. The protein is S-adenosylmethionine decarboxylase proenzyme of Pseudomonas syringae pv. tomato (strain ATCC BAA-871 / DC3000).